The following is a 162-amino-acid chain: Cyclic pyranopterin monophosphate synthase (162 aa).

Residues 79 to 81 and 117 to 118 each bind substrate; these read LCH and ME. Aspartate 132 is an active-site residue.

This sequence belongs to the MoaC family. As to quaternary structure, homohexamer; trimer of dimers.

The enzyme catalyses (8S)-3',8-cyclo-7,8-dihydroguanosine 5'-triphosphate = cyclic pyranopterin phosphate + diphosphate. It functions in the pathway cofactor biosynthesis; molybdopterin biosynthesis. In terms of biological role, catalyzes the conversion of (8S)-3',8-cyclo-7,8-dihydroguanosine 5'-triphosphate to cyclic pyranopterin monophosphate (cPMP). The polypeptide is Cyclic pyranopterin monophosphate synthase (Bordetella petrii (strain ATCC BAA-461 / DSM 12804 / CCUG 43448)).